A 260-amino-acid polypeptide reads, in one-letter code: Proteasome assembly chaperone 2 (260 aa).

The protein belongs to the PSMG2 family. Forms a heterodimer with psmg1. Degraded by the proteasome upon completion of 20S proteasome maturation.

It is found in the nucleus. Its function is as follows. Chaperone protein which promotes assembly of the 20S proteasome as part of a heterodimer with psmg1. This is Proteasome assembly chaperone 2 from Danio rerio (Zebrafish).